Consider the following 931-residue polypeptide: Envelope glycoprotein B (931 aa).

An N-terminal signal peptide occupies residues 1 to 71 (MSPCGYYSKW…FSMFVTAVVS (71 aa)). Over 72 to 786 (VSPSSFYESL…HGFTTFLSNP (715 aa)) the chain is Virion surface. Cystine bridges form between Cys122/Cys584, Cys139/Cys540, Cys213/Cys277, Cys369/Cys417, and Cys608/Cys645. An N-linked (GlcNAc...) asparagine; by host glycan is attached at Asn147. The segment at 179-185 (AWAGSSY) is involved in fusion and/or binding to host membrane. Residue Asn257 is glycosylated (N-linked (GlcNAc...) asparagine; by host). Residues 264–271 (GTPGTYRT) are involved in fusion and/or binding to host membrane. N-linked (GlcNAc...) asparagine; by host glycans are attached at residues Asn435, Asn503, Asn620, and Asn686. 2 hydrophobic membrane proximal region regions span residues 731–784 (IDKV…TFLS) and 764–784 (VVLG…TFLS). The chain crosses the membrane as a helical span at residues 787-807 (FGALAVGLLVLAGLVAAFFAY). At 808 to 931 (RYVLKLKTSP…RVRTENVTGV (124 aa)) the chain is on the intravirion side. The Golgi targeting signature appears at 881–884 (YMTL). The Di-leucine internalization motif motif lies at 904-906 (LLT). The short motif at 920-923 (YSRV) is the Internalization motif element.

This sequence belongs to the herpesviridae glycoprotein B family. As to quaternary structure, homotrimer; disulfide-linked. Binds to heparan sulfate proteoglycans. Interacts with gH/gL heterodimer. Interacts with gE. Post-translationally, a proteolytic cleavage by host furin generates two subunits that remain linked by disulfide bonds.

It localises to the virion membrane. Its subcellular location is the host cell membrane. It is found in the host endosome membrane. The protein resides in the host Golgi apparatus membrane. Envelope glycoprotein that forms spikes at the surface of virion envelope. Essential for the initial attachment to heparan sulfate moieties of the host cell surface proteoglycans. Involved in fusion of viral and cellular membranes leading to virus entry into the host cell. Following initial binding to its host receptors, membrane fusion is mediated by the fusion machinery composed at least of gB and the heterodimer gH/gL. May be involved in the fusion between the virion envelope and the outer nuclear membrane during virion egress. This Varicella-zoster virus (strain Dumas) (HHV-3) protein is Envelope glycoprotein B.